A 307-amino-acid chain; its full sequence is Secondary metabolism regulator LAE1 (307 aa).

Belongs to the methyltransferase superfamily. LaeA methyltransferase family. As to quaternary structure, component of the heterotrimeric velvet complex composed of LAE1, VEL1 and VEL2; VEL1 acting as a bridging protein between LAE1 and VEL2.

It localises to the nucleus. The catalysed reaction is L-methionyl-[protein] + S-adenosyl-L-methionine = S-methyl-L-methionyl-[protein] + S-adenosyl-L-homocysteine. Functionally, methyltransferase that performs automethylation. No other methyl-accepting substrate has been identified yet. Component of the velvet transcription factor complex that acts as a global regulator for secondary metabolite gene expression. Controls the expression of the T-toxin gene cluster. Promotes oxidative stress tolerance and acts as a virulence factors during infection. Negatively regulate mycelial pigmentation and controls sexual development, as well as asexual development during vegetative growth. The polypeptide is Secondary metabolism regulator LAE1 (Cochliobolus heterostrophus (strain C5 / ATCC 48332 / race O) (Southern corn leaf blight fungus)).